Here is a 303-residue protein sequence, read N- to C-terminus: Glycine--tRNA ligase alpha subunit (303 aa).

The protein belongs to the class-II aminoacyl-tRNA synthetase family. Tetramer of two alpha and two beta subunits.

It is found in the cytoplasm. It carries out the reaction tRNA(Gly) + glycine + ATP = glycyl-tRNA(Gly) + AMP + diphosphate. This Stenotrophomonas maltophilia (strain R551-3) protein is Glycine--tRNA ligase alpha subunit.